Here is a 534-residue protein sequence, read N- to C-terminus: Beta-glucosidase 31 (534 aa).

A signal peptide spans 1 to 22 (MAIKLIALVITLCVASWDVAQG). Gln-51 serves as a coordination point for a beta-D-glucoside. A glycan (N-linked (GlcNAc...) asparagine) is linked at Asn-68. A beta-D-glucoside contacts are provided by residues His-154 and 199-200 (NE). Residue Glu-200 is the Proton donor of the active site. Cys-219 and Cys-227 are disulfide-bonded. A beta-D-glucoside is bound at residue Tyr-344. Asn-374 carries N-linked (GlcNAc...) asparagine glycosylation. An a beta-D-glucoside-binding site is contributed by Glu-417. The active-site Nucleophile is the Glu-417. The N-linked (GlcNAc...) asparagine glycan is linked to Asn-425. A beta-D-glucoside-binding positions include Trp-467, 474-475 (EW), and Phe-483.

Belongs to the glycosyl hydrolase 1 family.

The enzyme catalyses Hydrolysis of terminal, non-reducing beta-D-glucosyl residues with release of beta-D-glucose.. In Arabidopsis thaliana (Mouse-ear cress), this protein is Beta-glucosidase 31.